We begin with the raw amino-acid sequence, 78 residues long: Large ribosomal subunit protein uL24 (78 aa).

The disordered stretch occupies residues 52 to 78 (PSEKTPNGGHVNKEMPIDISNVAKVEG).

Belongs to the universal ribosomal protein uL24 family. In terms of assembly, part of the 50S ribosomal subunit.

In terms of biological role, one of two assembly initiator proteins, it binds directly to the 5'-end of the 23S rRNA, where it nucleates assembly of the 50S subunit. Its function is as follows. One of the proteins that surrounds the polypeptide exit tunnel on the outside of the subunit. The sequence is that of Large ribosomal subunit protein uL24 from Campylobacter concisus (strain 13826).